The following is a 545-amino-acid chain: Threonine--tRNA ligase catalytic subunit (545 aa).

The segment at 139–433 is catalytic; that stretch reads DHRLIGEKLD…LLEHFKGKLP (295 aa). The Zn(2+) site is built by cysteine 231, histidine 282, and histidine 410.

It belongs to the class-II aminoacyl-tRNA synthetase family. In terms of assembly, homodimer. Probably interacts with its editing subunit. The cofactor is Zn(2+).

It localises to the cytoplasm. It catalyses the reaction tRNA(Thr) + L-threonine + ATP = L-threonyl-tRNA(Thr) + AMP + diphosphate + H(+). In terms of biological role, catalyzes the attachment of threonine to tRNA(Thr) in a two-step reaction: L-threonine is first activated by ATP to form Thr-AMP and then transferred to the acceptor end of tRNA(Thr). Also activates L-serine and transfers it to tRNA(Thr) but cannot deacylate incorrectly charged amino acid; unlike most archaea the editing function is found in a freestanding protein. In Saccharolobus islandicus (strain M.16.4 / Kamchatka #3) (Sulfolobus islandicus), this protein is Threonine--tRNA ligase catalytic subunit.